The primary structure comprises 572 residues: O-fucosyltransferase 16 (572 aa).

A helical; Signal-anchor for type II membrane protein transmembrane segment spans residues 17 to 37 (LLPLVIAVSLSLLILFAFLSF). 2 N-linked (GlcNAc...) asparagine glycosylation sites follow: N92 and N136. 274–276 (HLR) contributes to the substrate binding site. N446 and N506 each carry an N-linked (GlcNAc...) asparagine glycan. Residues 498–572 (ESRKLGKKNK…EPELEAMLSD (75 aa)) form a disordered region. A compositionally biased stretch (acidic residues) spans 521 to 541 (DQTEEDDPDWSEPDYEEEQSD). N-linked (GlcNAc...) asparagine glycosylation is present at N549. Residues 554-566 (DYDDPSTSDEPEL) show a composition bias toward acidic residues.

Belongs to the glycosyltransferase GT106 family.

The protein localises to the membrane. Its pathway is glycan metabolism. This Arabidopsis thaliana (Mouse-ear cress) protein is O-fucosyltransferase 16.